A 417-amino-acid polypeptide reads, in one-letter code: MSRFKSDFLRTLDERGFIHQISDEAGLDELFAKETVTAYIGYDPTASSLHVGHLTQIMMLHWMQKTGHQPISLMGGGTGMVGDPSFKEEARKLMTIDMIEDNITSLKHVFANYLDYDRAENPALMINNADWLRGLNYLEFLRDVGRHFSVNRMLSFDSVKTRLDREQSLSFLEFNYMILQAYDFVELNQRTGCRLQMGGSDQWGNIINGIDLGHRMGTPQLYALTSPLLTTSSGAKMGKSASGAVWLNKDLLPVYDFWQYWRNTEDADVVRFAKLFTTLPMDEIARIATLGGSEINEAKKILATEVTAILHGRAAAEEAAETARKTFEEGALAENLPSIEVPTSELDAGVGVLSLIVRAGLASSNGEARRHVQGGAVKINEQGVSDERQIIGTGEVTGDGVIKLSVGKKKHVLVRPA.

Tyr39 contributes to the L-tyrosine binding site. The 'HIGH' region motif lies at 44–53 (PTASSLHVGH). Positions 176 and 180 each coordinate L-tyrosine. The 'KMSKS' region motif lies at 236–240 (KMGKS). Lys239 contributes to the ATP binding site. An S4 RNA-binding domain is found at 350 to 416 (VGVLSLIVRA…GKKKHVLVRP (67 aa)).

The protein belongs to the class-I aminoacyl-tRNA synthetase family. TyrS type 1 subfamily. In terms of assembly, homodimer.

It is found in the cytoplasm. It catalyses the reaction tRNA(Tyr) + L-tyrosine + ATP = L-tyrosyl-tRNA(Tyr) + AMP + diphosphate + H(+). Catalyzes the attachment of tyrosine to tRNA(Tyr) in a two-step reaction: tyrosine is first activated by ATP to form Tyr-AMP and then transferred to the acceptor end of tRNA(Tyr). The chain is Tyrosine--tRNA ligase from Agrobacterium fabrum (strain C58 / ATCC 33970) (Agrobacterium tumefaciens (strain C58)).